The following is a 363-amino-acid chain: Cytochrome c oxidase subunit 2 (363 aa).

The segment at 1–23 (MTPRGPGRLQRLSQCRPQRGSGG) is disordered. Positions 1–41 (MTPRGPGRLQRLSQCRPQRGSGGPARGLRQLALAAMLGALA) are cleaved as a signal peptide. 2 helical membrane passes run 71 to 91 (LWIGAVIASLAVGVIVWGLIF) and 118 to 138 (LVLTVIPFLIISVLFYFTVVV). H254, C295, C299, and H303 together coordinate Cu cation.

This sequence belongs to the cytochrome c oxidase subunit 2 family. The cofactor is Cu cation. Heme serves as cofactor.

It localises to the cell membrane. The enzyme catalyses 4 Fe(II)-[cytochrome c] + O2 + 8 H(+)(in) = 4 Fe(III)-[cytochrome c] + 2 H2O + 4 H(+)(out). Subunits I and II form the functional core of the enzyme complex. Electrons originating in cytochrome c are transferred via heme a and Cu(A) to the binuclear center formed by heme a3 and Cu(B). The polypeptide is Cytochrome c oxidase subunit 2 (ctaC) (Mycobacterium bovis (strain ATCC BAA-935 / AF2122/97)).